The following is a 477-amino-acid chain: Iroquois homeobox protein 6a (477 aa).

Positions 148 to 210 form a DNA-binding region, homeobox; it reads GSTRRKNATR…NARRRLKKEN (63 aa). Disordered regions lie at residues 209–282 and 303–323; these read ENKM…PDIP and DYLDHLGSKPQQQQPSPQSTS. Positions 219-237 are enriched in basic and acidic residues; sequence KAGDDRKEDLDSKDSKDEQ. Residues 243–253 show a composition bias toward acidic residues; sequence DLDDMEDEDCD. Residues 254 to 264 show a composition bias toward basic and acidic residues; sequence KLDSDCEKSGQ. The segment covering 310-321 has biased composition (low complexity); the sequence is SKPQQQQPSPQS.

The protein belongs to the TALE/IRO homeobox family.

Its subcellular location is the nucleus. In terms of biological role, transcription factor. Binds to the iroquois binding site (IBS) motif of target genes to regulate gene expression; functions as a transcriptional activator or repressor. In concert with irx5a, plays a role in visual performance. The sequence is that of Iroquois homeobox protein 6a from Danio rerio (Zebrafish).